The primary structure comprises 344 residues: Protein pelota homolog (344 aa).

This sequence belongs to the eukaryotic release factor 1 family. Pelota subfamily. As to quaternary structure, monomer. It depends on a divalent metal cation as a cofactor.

It localises to the cytoplasm. In terms of biological role, may function in recognizing stalled ribosomes, interact with stem-loop structures in stalled mRNA molecules, and effect endonucleolytic cleavage of the mRNA. May play a role in the release non-functional ribosomes and degradation of damaged mRNAs. Has endoribonuclease activity. The protein is Protein pelota homolog of Saccharolobus islandicus (strain M.14.25 / Kamchatka #1) (Sulfolobus islandicus).